The sequence spans 260 residues: 3-oxoadipate CoA-transferase subunit B (260 aa).

Glutamate 51 is a catalytic residue.

This sequence belongs to the 3-oxoacid CoA-transferase subunit B family. As to quaternary structure, heterotetramer composed of 2 A and 2 B subunits.

The catalysed reaction is 3-oxoadipate + succinyl-CoA = 3-oxoadipyl-CoA + succinate. It participates in aromatic compound metabolism; beta-ketoadipate pathway; acetyl-CoA and succinyl-CoA from 3-oxoadipate: step 1/2. The sequence is that of 3-oxoadipate CoA-transferase subunit B (catJ) from Pseudomonas knackmussii (strain DSM 6978 / CCUG 54928 / LMG 23759 / B13).